Consider the following 110-residue polypeptide: MEVLAKHRFARTSPQKCRLVADQIRGLPVAKALEILTFSPKKAAVLVKKVLDSAIANAEHNEGADIDELKVGKVFVDEGPTMKRIMPRAKGRADRIIKRTSHITVVVSDR.

Belongs to the universal ribosomal protein uL22 family. Part of the 50S ribosomal subunit.

Functionally, this protein binds specifically to 23S rRNA; its binding is stimulated by other ribosomal proteins, e.g. L4, L17, and L20. It is important during the early stages of 50S assembly. It makes multiple contacts with different domains of the 23S rRNA in the assembled 50S subunit and ribosome. Its function is as follows. The globular domain of the protein is located near the polypeptide exit tunnel on the outside of the subunit, while an extended beta-hairpin is found that lines the wall of the exit tunnel in the center of the 70S ribosome. The sequence is that of Large ribosomal subunit protein uL22 from Shewanella loihica (strain ATCC BAA-1088 / PV-4).